Reading from the N-terminus, the 365-residue chain is MSGNSIGQNFVVTTFGESHGVALGCIIDGCPPGLELTEADMQHDLDRRRPGTSRYTTARREPDEVRILSGVFEGKTTGTSIGLIIENTDQRSQDYSNIKDLFRPGHADYTYQQKYGLRDYRGGGRSSARETAMRVAAGAVAKKYLKAVHGIEIYGFLSQLGPIEAEHIDREQIEQNAFFFPDASKLEALDEYMRELKKSGDSIGAKVSVIATNVPVGLGEPVFDRLDADIAHALMGINAVKGVEIGDGFAVVTQKGSEHRDLMSPEGFASNHAGGVLGGISSGQPIVAHMALKPTSSISIPGESMTVQGNTAEVVTKGRHDPCVGIRAVPIAEAMLAIVLMDHLLRHRAQNQHVHSETPVLGMRS.

The tract at residues 41–60 (MQHDLDRRRPGTSRYTTARR) is disordered. Residues R48 and R54 each contribute to the NADP(+) site. FMN-binding positions include 125–127 (RSS), 238–239 (NA), G278, 293–297 (KPTSS), and R319.

Belongs to the chorismate synthase family. In terms of assembly, homotetramer. It depends on FMNH2 as a cofactor.

It catalyses the reaction 5-O-(1-carboxyvinyl)-3-phosphoshikimate = chorismate + phosphate. Its pathway is metabolic intermediate biosynthesis; chorismate biosynthesis; chorismate from D-erythrose 4-phosphate and phosphoenolpyruvate: step 7/7. Its function is as follows. Catalyzes the anti-1,4-elimination of the C-3 phosphate and the C-6 proR hydrogen from 5-enolpyruvylshikimate-3-phosphate (EPSP) to yield chorismate, which is the branch point compound that serves as the starting substrate for the three terminal pathways of aromatic amino acid biosynthesis. This reaction introduces a second double bond into the aromatic ring system. The sequence is that of Chorismate synthase from Shewanella amazonensis (strain ATCC BAA-1098 / SB2B).